The following is a 739-amino-acid chain: NAD(P)H-quinone oxidoreductase subunit 5, chloroplastic (739 aa).

Helical transmembrane passes span 9–29 (WIIP…LILF), 40–60 (WAFQ…YLSI), 89–109 (IDPL…MVLI), 125–145 (FAYM…SNLI), 147–167 (IYIF…FWFT), 185–205 (GDFG…SFEF), 219–239 (NEVN…GAVA), 258–278 (TPIS…FLVA), 286–306 (VIPY…LLGA), 327–347 (LGYM…FHLI), 354–374 (ALLF…VGYS), 396–416 (ITFL…CFWS), 425–445 (WLYS…TAFY), 543–563 (LFPI…GIPF), 602–622 (VVSV…YKPI), and 717–737 (SYLF…YLLF).

It belongs to the complex I subunit 5 family. In terms of assembly, NDH is composed of at least 16 different subunits, 5 of which are encoded in the nucleus.

It localises to the plastid. Its subcellular location is the chloroplast thylakoid membrane. It carries out the reaction a plastoquinone + NADH + (n+1) H(+)(in) = a plastoquinol + NAD(+) + n H(+)(out). It catalyses the reaction a plastoquinone + NADPH + (n+1) H(+)(in) = a plastoquinol + NADP(+) + n H(+)(out). Functionally, NDH shuttles electrons from NAD(P)H:plastoquinone, via FMN and iron-sulfur (Fe-S) centers, to quinones in the photosynthetic chain and possibly in a chloroplast respiratory chain. The immediate electron acceptor for the enzyme in this species is believed to be plastoquinone. Couples the redox reaction to proton translocation, and thus conserves the redox energy in a proton gradient. The polypeptide is NAD(P)H-quinone oxidoreductase subunit 5, chloroplastic (ndhF) (Solanum tuberosum (Potato)).